The following is a 505-amino-acid chain: Maturase K (505 aa).

The protein belongs to the intron maturase 2 family. MatK subfamily.

The protein localises to the plastid. Its subcellular location is the chloroplast. Its function is as follows. Usually encoded in the trnK tRNA gene intron. Probably assists in splicing its own and other chloroplast group II introns. The polypeptide is Maturase K (Calycanthus floridus (Eastern sweetshrub)).